We begin with the raw amino-acid sequence, 168 residues long: UPF0478 protein SH1183 (168 aa).

Residues 7 to 27 (IAGIIAAIAFLVLCIGIVVVL) form a helical membrane-spanning segment. The segment at 144 to 168 (YRNTSVGNDANHSNENYTTNVEKNF) is disordered.

This sequence belongs to the UPF0478 family.

Its subcellular location is the cell membrane. This is UPF0478 protein SH1183 from Staphylococcus haemolyticus (strain JCSC1435).